The primary structure comprises 315 residues: 4-hydroxy-3-methylbut-2-enyl diphosphate reductase (315 aa).

Residue cysteine 12 coordinates [4Fe-4S] cluster. Positions 41 and 74 each coordinate (2E)-4-hydroxy-3-methylbut-2-enyl diphosphate. Dimethylallyl diphosphate is bound by residues histidine 41 and histidine 74. The isopentenyl diphosphate site is built by histidine 41 and histidine 74. Cysteine 96 is a [4Fe-4S] cluster binding site. Residue histidine 124 coordinates (2E)-4-hydroxy-3-methylbut-2-enyl diphosphate. Dimethylallyl diphosphate is bound at residue histidine 124. Histidine 124 lines the isopentenyl diphosphate pocket. The active-site Proton donor is glutamate 126. Threonine 168 lines the (2E)-4-hydroxy-3-methylbut-2-enyl diphosphate pocket. Residue cysteine 198 coordinates [4Fe-4S] cluster. (2E)-4-hydroxy-3-methylbut-2-enyl diphosphate contacts are provided by serine 226, serine 227, asparagine 228, and serine 270. Residues serine 226, serine 227, asparagine 228, and serine 270 each coordinate dimethylallyl diphosphate. 4 residues coordinate isopentenyl diphosphate: serine 226, serine 227, asparagine 228, and serine 270.

It belongs to the IspH family. Requires [4Fe-4S] cluster as cofactor.

It catalyses the reaction isopentenyl diphosphate + 2 oxidized [2Fe-2S]-[ferredoxin] + H2O = (2E)-4-hydroxy-3-methylbut-2-enyl diphosphate + 2 reduced [2Fe-2S]-[ferredoxin] + 2 H(+). The enzyme catalyses dimethylallyl diphosphate + 2 oxidized [2Fe-2S]-[ferredoxin] + H2O = (2E)-4-hydroxy-3-methylbut-2-enyl diphosphate + 2 reduced [2Fe-2S]-[ferredoxin] + 2 H(+). Its pathway is isoprenoid biosynthesis; dimethylallyl diphosphate biosynthesis; dimethylallyl diphosphate from (2E)-4-hydroxy-3-methylbutenyl diphosphate: step 1/1. The protein operates within isoprenoid biosynthesis; isopentenyl diphosphate biosynthesis via DXP pathway; isopentenyl diphosphate from 1-deoxy-D-xylulose 5-phosphate: step 6/6. Functionally, catalyzes the conversion of 1-hydroxy-2-methyl-2-(E)-butenyl 4-diphosphate (HMBPP) into a mixture of isopentenyl diphosphate (IPP) and dimethylallyl diphosphate (DMAPP). Acts in the terminal step of the DOXP/MEP pathway for isoprenoid precursor biosynthesis. This Pseudomonas fluorescens (strain ATCC BAA-477 / NRRL B-23932 / Pf-5) protein is 4-hydroxy-3-methylbut-2-enyl diphosphate reductase.